The sequence spans 179 residues: MKSLLSTLVIIMFLAHLVTGGWYVKKCANTLGNCRKMCRDGEKQTEPATSKCPIGKLCCVLDFKISGHCGGGGQNSDNLVTAGGDEGSSAKASTAAMVGAAAMAGTPTKTSAPAKTSAPAKTSTTTKASNAAKASTTTKASNAAKASAATMAGNTTKVSTAAIASTPAQASTPTKANST.

The first 20 residues, 1–20 (MKSLLSTLVIIMFLAHLVTG), serve as a signal peptide directing secretion. Cystine bridges form between C27-C58, C34-C52, and C38-C59. Positions 105–150 (GTPTKTSAPAKTSAPAKTSTTTKASNAAKASTTTKASNAAKASAAT) are enriched in low complexity. The interval 105–152 (GTPTKTSAPAKTSAPAKTSTTTKASNAAKASTTTKASNAAKASAATMA) is disordered.

The protein belongs to the beta-defensin family. Post-translationally, O-glycosylated; glycans contain alpha(2,3)-linked sialic acids. In terms of tissue distribution, specifically expressed in corpus epididymis and cauda epididymis with expression in corpus being highest (at protein level). Not detected in other tissues tested, including testis, prostate, seminal vesicle and vas deferens (at protein level).

It is found in the cytoplasmic vesicle. Its subcellular location is the secretory vesicle. The protein resides in the acrosome. The protein localises to the secreted. It localises to the extracellular space. In terms of biological role, probable component of sperm glycocalyx. Likely protects and facilitates transport of sperm in the female reproductive tract. Probably released from the sperm surface during capacitation. The polypeptide is Beta-defensin 22 (Mus musculus (Mouse)).